The sequence spans 212 residues: Ropporin-1 (212 aa).

Residues 12-43 (PELPELLKQFTKDAIRTQPPDLIQWAAEYFGA) enclose the RIIa domain. At S56 the chain carries Phosphoserine. The segment at 209–212 (VRLE) is interaction with RHPN1.

It belongs to the ropporin family. In terms of assembly, homodimer. Interacts with AKAP3. May interact with SPA17. Interacts with RHPN1. Interacts with FSCB; the interaction increases upon spermatozoa capacitation conditions. Interacts with CFAP61. Post-translationally, sumoylated, sumoylation decreases upon spermatozoa capacitation conditions. In terms of tissue distribution, testis-specific. Present in the most inner parts of seminiferous tubules (at protein level).

It is found in the cell projection. Its subcellular location is the cilium. It localises to the flagellum. Important for male fertility. With ROPN1L, involved in fibrous sheath integrity and sperm motility, plays a role in PKA-dependent signaling processes required for spermatozoa capacitation. This Mus musculus (Mouse) protein is Ropporin-1 (Ropn1).